The chain runs to 202 residues: Remorin 1.4 (202 aa).

Over residues 1–10 (MAEEEPKKVT) the composition is skewed to basic and acidic residues. A disordered region spans residues 1 to 79 (MAEEEPKKVT…VEEEKKEGSV (79 aa)). The segment covering 25-39 (EKPAAAADVAPQEKP) has biased composition (low complexity). Residues 40–50 (VAPPPVLPSPA) show a composition bias toward pro residues. Residues 68–79 (KEVEEEKKEGSV) are compositionally biased toward basic and acidic residues. The stretch at 123–169 (ENNKKAAVEAELKKMEEQLEKKKAEYVEQMKNKIAQIHKEAEEKRAM) forms a coiled coil.

Belongs to the remorin family.

This is Remorin 1.4 from Arabidopsis thaliana (Mouse-ear cress).